The chain runs to 306 residues: Aspartate carbamoyltransferase catalytic subunit (306 aa).

Residues arginine 54 and threonine 55 each contribute to the carbamoyl phosphate site. Lysine 83 serves as a coordination point for L-aspartate. The carbamoyl phosphate site is built by arginine 104, histidine 132, and glutamine 135. The L-aspartate site is built by arginine 165 and arginine 227. Residues leucine 266 and proline 267 each coordinate carbamoyl phosphate.

This sequence belongs to the aspartate/ornithine carbamoyltransferase superfamily. ATCase family. Heterododecamer (2C3:3R2) of six catalytic PyrB chains organized as two trimers (C3), and six regulatory PyrI chains organized as three dimers (R2).

It catalyses the reaction carbamoyl phosphate + L-aspartate = N-carbamoyl-L-aspartate + phosphate + H(+). It participates in pyrimidine metabolism; UMP biosynthesis via de novo pathway; (S)-dihydroorotate from bicarbonate: step 2/3. Its function is as follows. Catalyzes the condensation of carbamoyl phosphate and aspartate to form carbamoyl aspartate and inorganic phosphate, the committed step in the de novo pyrimidine nucleotide biosynthesis pathway. This Finegoldia magna (strain ATCC 29328 / DSM 20472 / WAL 2508) (Peptostreptococcus magnus) protein is Aspartate carbamoyltransferase catalytic subunit.